Here is a 530-residue protein sequence, read N- to C-terminus: Autoinducer-2 kinase (530 aa).

It belongs to the FGGY kinase family.

It localises to the cytoplasm. The catalysed reaction is (S)-4,5-dihydroxypentane-2,3-dione + ATP = (2S)-2-hydroxy-3,4-dioxopentyl phosphate + ADP + H(+). Its function is as follows. Catalyzes the phosphorylation of autoinducer-2 (AI-2) to phospho-AI-2, which subsequently inactivates the transcriptional regulator LsrR and leads to the transcription of the lsr operon. Phosphorylates the ring-open form of (S)-4,5-dihydroxypentane-2,3-dione (DPD), which is the precursor to all AI-2 signaling molecules, at the C5 position. In Yersinia pestis bv. Antiqua (strain Angola), this protein is Autoinducer-2 kinase.